A 304-amino-acid polypeptide reads, in one-letter code: Protein phosphatase PTC7 homolog (304 aa).

The transit peptide at 1–68 directs the protein to the mitochondrion; that stretch reads MFSVLSYGRL…GDDACFVARH (68 aa). Positions 69-299 constitute a PPM-type phosphatase domain; it reads RSADVLGVAD…DDITVLLSIV (231 aa). The Mn(2+) site is built by aspartate 78, glycine 79, and aspartate 223.

The protein belongs to the PP2C family. In terms of assembly, interacts with FBXL4, BNIP3 and NIX; these interactions are important for ubiquitination and degradation of BNIP3 and NIX. Mg(2+) is required as a cofactor. Mn(2+) serves as cofactor. As to expression, expressed in keratinocytes (at protein level).

Its subcellular location is the mitochondrion matrix. It catalyses the reaction O-phospho-L-seryl-[protein] + H2O = L-seryl-[protein] + phosphate. The catalysed reaction is O-phospho-L-threonyl-[protein] + H2O = L-threonyl-[protein] + phosphate. With respect to regulation, inhibited by sodium orthovanadate. Functionally, protein phosphatase that plays an essential role in mitochondrial metabolism and biogenesis. Positively regulates biosynthesis of the ubiquinone, coenzyme Q. Dephosphorylates the ubiquinone biosynthesis protein COQ7 which is likely to lead to its activation. Serves as a crucial sensor for mitophagy, though the underlying mechanism remains ambiguous. May dephosphorylate BNIP3 and NIX and thereby directly regulates mitophagy receptor function and stability. Alternatively, promotes SCF-FBXL4-dependent ubiquitination and degradation of BNIP3 and NIX independently of its catalytic activity to restrain mitophagy. The sequence is that of Protein phosphatase PTC7 homolog (PPTC7) from Homo sapiens (Human).